The following is a 153-amino-acid chain: Holo-[acyl-carrier-protein] synthase (153 aa).

Mg(2+)-binding residues include D24 and E78.

This sequence belongs to the P-Pant transferase superfamily. AcpS family. It depends on Mg(2+) as a cofactor.

It localises to the cytoplasm. The enzyme catalyses apo-[ACP] + CoA = holo-[ACP] + adenosine 3',5'-bisphosphate + H(+). Its function is as follows. Transfers the 4'-phosphopantetheine moiety from coenzyme A to a Ser of acyl-carrier-protein. In Bordetella pertussis (strain Tohama I / ATCC BAA-589 / NCTC 13251), this protein is Holo-[acyl-carrier-protein] synthase.